The chain runs to 145 residues: UPF0179 protein Maeo_1037 (145 aa).

The protein belongs to the UPF0179 family.

In Methanococcus aeolicus (strain ATCC BAA-1280 / DSM 17508 / OCM 812 / Nankai-3), this protein is UPF0179 protein Maeo_1037.